The following is a 427-amino-acid chain: MASDQRDTDFSAESPDLEEDGGGGGGGRGGGETESDEDVVIPEPNEAEDDDHDPDPDPEYEDLNSPSMISRAPATKSSSGTVTVALPAGSAVPVASIPSDSDQKWHRMTEIVHQRPPIDDSRRLFQRLWTDEDEIELLRGFLDYITNHRGNSSHPPDTAPFYEQIKSKLQLEFNKNQLVEKLRRLKKKYRNVMSKFSSGKEVFFKSPHDQATFDISRKIWNQTGKIIGFEDNNVMDLEETNHVNNANGSSGFNVSVIGNANVDVDSENGLEKKVTISRKRSRSRIGKIDEDKPVLAPCDGVIPNAVNLNENVAVGCDFGDGRNLGVLIEETVKNCVSPMIKEMMNSTTGMMMAATGGFPGGGAHALGVLSPMLMPSMNLGFGGKGVGDERWRRQQILELEVYSRRLELVQEQIRATVNELKTMPNGG.

Positions methionine 1–threonine 81 are disordered. Serine 14 is modified (phosphoserine). A compositionally biased stretch (gly residues) spans glycine 22–glutamate 32. Residues threonine 33–aspartate 62 show a composition bias toward acidic residues.

Belongs to the GeBP family.

The chain is Probable transcription factor At5g28040 from Arabidopsis thaliana (Mouse-ear cress).